The sequence spans 528 residues: Phosphoenolpyruvate carboxykinase (ATP) (528 aa).

Residues arginine 54, tyrosine 190, and lysine 196 each coordinate substrate. Residues lysine 196, histidine 215, and 231-239 (GLSGTGKTT) each bind ATP. Mn(2+) contacts are provided by lysine 196 and histidine 215. Mn(2+) is bound at residue aspartate 252. Positions 280, 316, and 441 each coordinate ATP. Arginine 316 lines the substrate pocket.

The protein belongs to the phosphoenolpyruvate carboxykinase (ATP) family. The cofactor is Mn(2+).

It is found in the cytoplasm. The catalysed reaction is oxaloacetate + ATP = phosphoenolpyruvate + ADP + CO2. Its pathway is carbohydrate biosynthesis; gluconeogenesis. Involved in the gluconeogenesis. Catalyzes the conversion of oxaloacetate (OAA) to phosphoenolpyruvate (PEP) through direct phosphoryl transfer between the nucleoside triphosphate and OAA. This chain is Phosphoenolpyruvate carboxykinase (ATP), found in Sulfurimonas denitrificans (strain ATCC 33889 / DSM 1251) (Thiomicrospira denitrificans (strain ATCC 33889 / DSM 1251)).